Reading from the N-terminus, the 445-residue chain is Arginine/agmatine antiporter (445 aa).

Topologically, residues 1 to 9 (MSSDADAHK) are cytoplasmic. A helical transmembrane segment spans residues 10-30 (VGLIPVTLMVSGNIMGSGVFL). I23 lines the agmatine pocket. Residues I23 and S26 each coordinate L-arginine. Topologically, residues 31-38 (LPANLAAT) are periplasmic. A helical transmembrane segment spans residues 39–59 (GGIAIYGWLVTIIGALALSMV). The Cytoplasmic portion of the chain corresponds to 60–98 (YAKMSSLDPSPGGSYAYARRCFGPFLGYQTNVLYWLACW). Agmatine contacts are provided by A96, C97, and N101. A96 serves as a coordination point for L-arginine. The helical transmembrane segment at 99 to 119 (IGNIAMVVIGVGYLSYFFPIL) threads the bilayer. At 120–122 (KDP) the chain is on the periplasmic side. A helical transmembrane segment spans residues 123–143 (LVLTLTCVAVLWIFVLLNIVG). Residues 144–152 (PKMITRVQA) are Cytoplasmic-facing. A helical transmembrane segment spans residues 153-173 (VATVLALVPIVGIAVFGWFWF). The Periplasmic segment spans residues 174 to 196 (KGETYMAAWNVSGMNTFGAIQST). Residues 197–217 (LNVTLWSFIGVESASVAAGVV) form a helical membrane-spanning segment. 2 residues coordinate L-arginine: W202 and I205. Agmatine is bound at residue I205. Residues 218 to 225 (KNPKRNVP) are Cytoplasmic-facing. Residues 226 to 246 (IATIGGVLIAAVCYVLSTTAI) form a helical membrane-spanning segment. Over 247–275 (MGMIPNAALRVSASPFGDAARMALGDTAG) the chain is Periplasmic. The chain crosses the membrane as a helical span at residues 276 to 296 (AIVSFCAAAGCLGSLGGWTLL). Residue W293 participates in agmatine binding. The Cytoplasmic portion of the chain corresponds to 297 to 319 (AGQTAKAAADDGLFPPIFARVNK). Residues 320-340 (AGTPVAGLLIVGVLMTIFQFS) form a helical membrane-spanning segment. The Periplasmic segment spans residues 341–355 (SMSPNAAKEFGLVSS). A helical transmembrane segment spans residues 356-376 (VSVIFTLVPYLYTCAALLLLG). S357 provides a ligand contact to L-arginine. At 377–385 (HGHFGKARP) the chain is on the cytoplasmic side. A helical transmembrane segment spans residues 386-406 (LYLLITFVAFVYCIWAVIGSG). The Periplasmic segment spans residues 407 to 408 (AK). A helical membrane pass occupies residues 409–429 (EVMWSFVTLMVITALYALNYN). Topologically, residues 430 to 445 (RIHKNPYPLDAPVKQD) are cytoplasmic.

This sequence belongs to the amino acid-polyamine-organocation (APC) superfamily. Basic amino acid/polyamine antiporter (APA) (TC 2.A.3.2) family. In terms of assembly, homodimer; each subunit has its own individual transport capacity.

Its subcellular location is the cell inner membrane. It carries out the reaction agmatine(in) + L-arginine(out) = agmatine(out) + L-arginine(in). Major component of the acid-resistance (AR) system allowing enteric pathogens to survive the acidic environment in the stomach. Exchanges extracellular arginine for its intracellular decarboxylation product agmatine (Agm) thereby expelling intracellular protons. Probably undergoes several conformational states in order to translocate the substrate across the membrane; keeps the substrate accessible to only 1 side of the membrane at a time by opening and closing 3 membrane-internal gates. This chain is Arginine/agmatine antiporter (adiC), found in Salmonella typhi.